The primary structure comprises 620 residues: 1-deoxy-D-xylulose-5-phosphate synthase (620 aa).

Thiamine diphosphate-binding positions include His-80 and 121–123; that span reads GHS. Mg(2+) is bound at residue Asp-152. Thiamine diphosphate contacts are provided by residues 153–154, Asn-181, Tyr-288, and Glu-370; that span reads GA. Asn-181 lines the Mg(2+) pocket.

The protein belongs to the transketolase family. DXPS subfamily. As to quaternary structure, homodimer. The cofactor is Mg(2+). Thiamine diphosphate is required as a cofactor.

It catalyses the reaction D-glyceraldehyde 3-phosphate + pyruvate + H(+) = 1-deoxy-D-xylulose 5-phosphate + CO2. Its pathway is metabolic intermediate biosynthesis; 1-deoxy-D-xylulose 5-phosphate biosynthesis; 1-deoxy-D-xylulose 5-phosphate from D-glyceraldehyde 3-phosphate and pyruvate: step 1/1. Its function is as follows. Catalyzes the acyloin condensation reaction between C atoms 2 and 3 of pyruvate and glyceraldehyde 3-phosphate to yield 1-deoxy-D-xylulose-5-phosphate (DXP). In Salmonella arizonae (strain ATCC BAA-731 / CDC346-86 / RSK2980), this protein is 1-deoxy-D-xylulose-5-phosphate synthase.